A 403-amino-acid chain; its full sequence is Tyrosine--tRNA ligase (403 aa).

Positions 46-55 (PTAPDLHLGH) match the 'HIGH' region motif. Residues 230–234 (KMSKS) carry the 'KMSKS' region motif. Lys-233 lines the ATP pocket. Positions 342–402 (LFITQILNQA…GKKAYAKVTV (61 aa)) constitute an S4 RNA-binding domain.

The protein belongs to the class-I aminoacyl-tRNA synthetase family. TyrS type 2 subfamily. In terms of assembly, homodimer.

Its subcellular location is the cytoplasm. The enzyme catalyses tRNA(Tyr) + L-tyrosine + ATP = L-tyrosyl-tRNA(Tyr) + AMP + diphosphate + H(+). Catalyzes the attachment of tyrosine to tRNA(Tyr) in a two-step reaction: tyrosine is first activated by ATP to form Tyr-AMP and then transferred to the acceptor end of tRNA(Tyr). The protein is Tyrosine--tRNA ligase of Psychrobacter arcticus (strain DSM 17307 / VKM B-2377 / 273-4).